The chain runs to 218 residues: Adenylate kinase (218 aa).

Gly10–Thr15 contacts ATP. Positions Ser30–Val59 are NMP. AMP is bound by residues Thr31, Arg36, Lys57 to Val59, Gly85 to Arg88, and Gln92. The segment at Gly122–Asp159 is LID. Residues Arg123 and Thr132–Tyr133 each bind ATP. Positions 156 and 167 each coordinate AMP. Residue Gly203 participates in ATP binding.

This sequence belongs to the adenylate kinase family. As to quaternary structure, monomer.

It localises to the cytoplasm. The catalysed reaction is AMP + ATP = 2 ADP. The protein operates within purine metabolism; AMP biosynthesis via salvage pathway; AMP from ADP: step 1/1. In terms of biological role, catalyzes the reversible transfer of the terminal phosphate group between ATP and AMP. Plays an important role in cellular energy homeostasis and in adenine nucleotide metabolism. This chain is Adenylate kinase, found in Chlorobium phaeobacteroides (strain BS1).